The primary structure comprises 28 residues: MIRIISRANSVTSSNEVNRLVTGQIPHD.

Cotranscribed with fur, it is essential for fur translation. The fur ribosomal binding site (RBS) is occluded by the 5'-mRNA secondary structure, which is opened by uof translation. In Escherichia coli (strain K12), this protein is fur leader peptide (uof).